Here is a 236-residue protein sequence, read N- to C-terminus: Lectin CPL (236 aa).

Glutamate 8 and aspartate 10 together coordinate Mn(2+). Ca(2+) is bound by residues aspartate 10, tyrosine 12, asparagine 14, and aspartate 19. Asparagine 14 is a binding site for a carbohydrate. The Mn(2+) site is built by aspartate 19 and histidine 24. Residues 99-100 (VY), aspartate 207, and arginine 227 each bind a carbohydrate.

This sequence belongs to the leguminous lectin family. As to quaternary structure, homotetramer; dimer of dimers. In terms of processing, concanavalin A-like lectins of the Diocleinae subtribe undergo proteolytic processing referred to as circular permutation. The propeptide is split into an N-terminal and a C-terminal part, the gamma and beta chain, respectively. These are then religated in beta-gamma order to form the mature alpha chain. The beta and gamma chains can often be detected in cell extracts. Residues 1-118 of the mature chain, as displayed here, probably constitute the beta chain in the propeptide, residues 119-236 the gamma chain.

Functionally, D-mannose/D-glucose-binding lectin that also binds derivative alpha-methyl-D-mannppyranoside. Has hemagglutinating activity towards rabbit erythrocytes. In Bionia pedicellata (Camptosema pedicellatum), this protein is Lectin CPL.